A 156-amino-acid chain; its full sequence is MSSNKINKKSIARIAAVQAIYQNILQNNDDMDDIMQNVLSFYQNNNAITDLPENLKISLSISHFKMLVKSVFENIHKLDEIIDNHLTNDKDPAHMPILLRALLRVSICELLFCPTTPAKVVINEYTDIANDMLNEHEIGFVNSVLDKIAKEHTRLI.

Belongs to the NusB family.

Involved in transcription antitermination. Required for transcription of ribosomal RNA (rRNA) genes. Binds specifically to the boxA antiterminator sequence of the ribosomal RNA (rrn) operons. This is Transcription antitermination protein NusB from Rickettsia conorii (strain ATCC VR-613 / Malish 7).